The sequence spans 181 residues: Inner membrane-spanning protein YciB (181 aa).

The next 5 membrane-spanning stretches (helical) occupy residues 10–30 (LVIF…GALI), 50–70 (MHLI…VFHD), 72–92 (AFIK…LGIS), 118–138 (ITWY…YVAF), and 148–168 (FKVF…VFYL).

This sequence belongs to the YciB family.

It localises to the cell inner membrane. Its function is as follows. Plays a role in cell envelope biogenesis, maintenance of cell envelope integrity and membrane homeostasis. This chain is Inner membrane-spanning protein YciB, found in Shewanella putrefaciens (strain CN-32 / ATCC BAA-453).